Here is a 463-residue protein sequence, read N- to C-terminus: Retinoic acid receptor RXR-gamma (463 aa).

Residues methionine 1–isoleucine 138 are modulating. The interval glycine 16–proline 53 is disordered. NR C4-type zinc fingers lie at residues cysteine 139–cysteine 159 and cysteine 175–cysteine 199. Residues cysteine 139 to methionine 204 constitute a DNA-binding region (nuclear receptor). The tract at residues lysine 205–glycine 230 is hinge. Residues histidine 231–proline 459 form the NR LBD domain.

The protein belongs to the nuclear hormone receptor family. NR2 subfamily. As to quaternary structure, homodimer. Heterodimer with a RAR molecule. Binds DNA preferentially as a RAR/RXR heterodimer. Interacts with RARA. Post-translationally, acetylated by EP300. In terms of tissue distribution, expressed in the liver, but not detected in the adrenal gland (at protein level). Restricted expression in adrenal gland, kidney, liver, brain and lungs. Strong expression in heart and muscles.

The protein resides in the nucleus. The protein localises to the cytoplasm. Its function is as follows. Receptor for retinoic acid. Retinoic acid receptors bind as heterodimers to their target response elements in response to their ligands, all-trans or 9-cis retinoic acid, and regulate gene expression in various biological processes. The RAR/RXR heterodimers bind to the retinoic acid response elements (RARE) composed of tandem 5'-AGGTCA-3' sites known as DR1-DR5. The high affinity ligand for RXRs is 9-cis retinoic acid. In Rattus norvegicus (Rat), this protein is Retinoic acid receptor RXR-gamma (Rxrg).